Reading from the N-terminus, the 20-residue chain is Pregnancy-associated glycoprotein 61C (20 aa).

The protein belongs to the peptidase A1 family. In terms of processing, N-glycosylated. Expressed in chorionic epithelium (trophectoderm).

The protein localises to the secreted. Its subcellular location is the extracellular space. The sequence is that of Pregnancy-associated glycoprotein 61C from Bubalus bubalis (Domestic water buffalo).